Here is an 892-residue protein sequence, read N- to C-terminus: Translation initiation factor IF-2 (892 aa).

Positions K88–A305 are disordered. Basic and acidic residues-rich tracts occupy residues V93–V159 and D166–K216. Residues G254–K269 are compositionally biased toward basic residues. Over residues H270–A282 the composition is skewed to basic and acidic residues. One can recognise a tr-type G domain in the interval P391 to K560. The segment at G400–T407 is G1. Residue G400–T407 coordinates GTP. A G2 region spans residues G425–H429. The tract at residues D446–G449 is G3. Residues D446–H450 and N500–D503 each bind GTP. The interval N500–D503 is G4. The segment at S536 to K538 is G5.

Belongs to the TRAFAC class translation factor GTPase superfamily. Classic translation factor GTPase family. IF-2 subfamily.

Its subcellular location is the cytoplasm. Functionally, one of the essential components for the initiation of protein synthesis. Protects formylmethionyl-tRNA from spontaneous hydrolysis and promotes its binding to the 30S ribosomal subunits. Also involved in the hydrolysis of GTP during the formation of the 70S ribosomal complex. The sequence is that of Translation initiation factor IF-2 from Salmonella agona (strain SL483).